The following is a 120-amino-acid chain: Large ribosomal subunit protein P3y (120 aa).

Residues 81-92 (GGAAAGGGGGGE) are compositionally biased toward gly residues. Positions 81 to 120 (GGAAAGGGGGGEAAAATKEEEKKKEESEEEEGDFGFDLFG) are disordered. Residues 97–106 (TKEEEKKKEE) show a composition bias toward basic and acidic residues.

This sequence belongs to the eukaryotic ribosomal protein P1/P2 family.

Plays an important role in the elongation step of protein synthesis. This Arabidopsis thaliana (Mouse-ear cress) protein is Large ribosomal subunit protein P3y (RPP3B).